The primary structure comprises 156 residues: Arginine repressor (156 aa).

Belongs to the ArgR family.

The protein localises to the cytoplasm. It functions in the pathway amino-acid biosynthesis; L-arginine biosynthesis [regulation]. Regulates arginine biosynthesis genes. The chain is Arginine repressor from Shewanella woodyi (strain ATCC 51908 / MS32).